The primary structure comprises 388 residues: Succinate--CoA ligase [ADP-forming] subunit beta (388 aa).

An ATP-grasp domain is found at 9–244 (KALFAEYGLP…PSQDDAREAH (236 aa)). ATP contacts are provided by residues Lys46, 53–55 (GRG), Glu99, Thr102, and Glu107. 2 residues coordinate Mg(2+): Asn199 and Asp213. Substrate contacts are provided by residues Asn264 and 321-323 (GIV).

The protein belongs to the succinate/malate CoA ligase beta subunit family. Heterotetramer of two alpha and two beta subunits. It depends on Mg(2+) as a cofactor.

The enzyme catalyses succinate + ATP + CoA = succinyl-CoA + ADP + phosphate. It catalyses the reaction GTP + succinate + CoA = succinyl-CoA + GDP + phosphate. It participates in carbohydrate metabolism; tricarboxylic acid cycle; succinate from succinyl-CoA (ligase route): step 1/1. Succinyl-CoA synthetase functions in the citric acid cycle (TCA), coupling the hydrolysis of succinyl-CoA to the synthesis of either ATP or GTP and thus represents the only step of substrate-level phosphorylation in the TCA. The beta subunit provides nucleotide specificity of the enzyme and binds the substrate succinate, while the binding sites for coenzyme A and phosphate are found in the alpha subunit. In Shewanella halifaxensis (strain HAW-EB4), this protein is Succinate--CoA ligase [ADP-forming] subunit beta.